Reading from the N-terminus, the 331-residue chain is Beta-ketoacyl-[acyl-carrier-protein] synthase III (331 aa).

Catalysis depends on residues cysteine 115 and histidine 255. Residues 256–260 (QANFR) form an ACP-binding region. Residue asparagine 285 is part of the active site.

This sequence belongs to the thiolase-like superfamily. FabH family. Homodimer.

The protein localises to the cytoplasm. It carries out the reaction malonyl-[ACP] + acetyl-CoA + H(+) = 3-oxobutanoyl-[ACP] + CO2 + CoA. It functions in the pathway lipid metabolism; fatty acid biosynthesis. In terms of biological role, catalyzes the condensation reaction of fatty acid synthesis by the addition to an acyl acceptor of two carbons from malonyl-ACP. Catalyzes the first condensation reaction which initiates fatty acid synthesis and may therefore play a role in governing the total rate of fatty acid production. Possesses both acetoacetyl-ACP synthase and acetyl transacylase activities. Its substrate specificity determines the biosynthesis of branched-chain and/or straight-chain of fatty acids. The polypeptide is Beta-ketoacyl-[acyl-carrier-protein] synthase III (Helicobacter pylori (strain Shi470)).